The following is a 415-amino-acid chain: Imidazolonepropionase (415 aa).

The Fe(3+) site is built by His-76 and His-78. Positions 76 and 78 each coordinate Zn(2+). Residues Arg-85, Tyr-148, and His-181 each contribute to the 4-imidazolone-5-propanoate site. Tyr-148 provides a ligand contact to N-formimidoyl-L-glutamate. Residue His-246 participates in Fe(3+) binding. His-246 provides a ligand contact to Zn(2+). 4-imidazolone-5-propanoate is bound at residue Glu-249. Residue Asp-320 participates in Fe(3+) binding. Position 320 (Asp-320) interacts with Zn(2+). The N-formimidoyl-L-glutamate site is built by Asn-322 and Gly-324. Thr-325 serves as a coordination point for 4-imidazolone-5-propanoate.

It belongs to the metallo-dependent hydrolases superfamily. HutI family. It depends on Zn(2+) as a cofactor. The cofactor is Fe(3+).

It localises to the cytoplasm. It carries out the reaction 4-imidazolone-5-propanoate + H2O = N-formimidoyl-L-glutamate. It functions in the pathway amino-acid degradation; L-histidine degradation into L-glutamate; N-formimidoyl-L-glutamate from L-histidine: step 3/3. Catalyzes the hydrolytic cleavage of the carbon-nitrogen bond in imidazolone-5-propanoate to yield N-formimidoyl-L-glutamate. It is the third step in the universal histidine degradation pathway. The sequence is that of Imidazolonepropionase from Thermoanaerobacter pseudethanolicus (strain ATCC 33223 / 39E) (Clostridium thermohydrosulfuricum).